A 177-amino-acid chain; its full sequence is Acireductone dioxygenase (177 aa).

Residues histidine 97, histidine 99, glutamate 103, and histidine 141 each contribute to the Fe(2+) site. Ni(2+) is bound by residues histidine 97, histidine 99, glutamate 103, and histidine 141.

This sequence belongs to the acireductone dioxygenase (ARD) family. In terms of assembly, monomer. Requires Fe(2+) as cofactor. Ni(2+) is required as a cofactor.

It carries out the reaction 1,2-dihydroxy-5-(methylsulfanyl)pent-1-en-3-one + O2 = 3-(methylsulfanyl)propanoate + CO + formate + 2 H(+). The catalysed reaction is 1,2-dihydroxy-5-(methylsulfanyl)pent-1-en-3-one + O2 = 4-methylsulfanyl-2-oxobutanoate + formate + 2 H(+). It participates in amino-acid biosynthesis; L-methionine biosynthesis via salvage pathway; L-methionine from S-methyl-5-thio-alpha-D-ribose 1-phosphate: step 5/6. Its function is as follows. Catalyzes 2 different reactions between oxygen and the acireductone 1,2-dihydroxy-3-keto-5-methylthiopentene (DHK-MTPene) depending upon the metal bound in the active site. Fe-containing acireductone dioxygenase (Fe-ARD) produces formate and 2-keto-4-methylthiobutyrate (KMTB), the alpha-ketoacid precursor of methionine in the methionine recycle pathway. Ni-containing acireductone dioxygenase (Ni-ARD) produces methylthiopropionate, carbon monoxide and formate, and does not lie on the methionine recycle pathway. The sequence is that of Acireductone dioxygenase from Leptospira biflexa serovar Patoc (strain Patoc 1 / ATCC 23582 / Paris).